The following is a 420-amino-acid chain: Adenylosuccinate synthetase (420 aa).

Residues 11-17 and 39-41 contribute to the GTP site; these read GDEGKGK and GHT. D12 (proton acceptor) is an active-site residue. The Mg(2+) site is built by D12 and G39. IMP contacts are provided by residues 12-15, 37-40, T129, R143, N218, T233, and R297; these read DEGK and NAGH. Residue H40 is the Proton donor of the active site. 293–299 contributes to the substrate binding site; the sequence is VTTGRKR. Residues R299, 325 to 327, and 407 to 409 contribute to the GTP site; these read KLD and GTG.

This sequence belongs to the adenylosuccinate synthetase family. In terms of assembly, homodimer. Requires Mg(2+) as cofactor.

It is found in the cytoplasm. It carries out the reaction IMP + L-aspartate + GTP = N(6)-(1,2-dicarboxyethyl)-AMP + GDP + phosphate + 2 H(+). It participates in purine metabolism; AMP biosynthesis via de novo pathway; AMP from IMP: step 1/2. Functionally, plays an important role in the de novo pathway and in the salvage pathway of purine nucleotide biosynthesis. Catalyzes the first committed step in the biosynthesis of AMP from IMP. This chain is Adenylosuccinate synthetase, found in Uncinocarpus reesii (strain UAMH 1704).